Here is a 341-residue protein sequence, read N- to C-terminus: HMG box-containing protein C10F6.08c (341 aa).

A compositionally biased stretch (basic and acidic residues) spans 68-77 (SEAKSREFGQ). Disordered stretches follow at residues 68 to 195 (SEAK…SNAK) and 236 to 341 (LTEE…SSNA). Composition is skewed to polar residues over residues 116–157 (DTNV…QVVQ) and 165–177 (NTDP…ITNL). Positions 178–195 (KTESSKSSGAKKATSNAK) are enriched in low complexity. The HMG box DNA-binding region spans 195-263 (KITDTMLFNH…KAREARRRRS (69 aa)). Basic and acidic residues-rich tracts occupy residues 238–256 (EEEK…EKAR) and 269–304 (KLEK…GQKE). 2 positions are modified to phosphothreonine: threonine 314 and threonine 315. Serine 316 carries the post-translational modification Phosphoserine.

It is found in the nucleus. This chain is HMG box-containing protein C10F6.08c, found in Schizosaccharomyces pombe (strain 972 / ATCC 24843) (Fission yeast).